A 635-amino-acid polypeptide reads, in one-letter code: Cilia- and flagella-associated protein 206 (635 aa).

It belongs to the CFAP206 family.

The protein localises to the cytoplasm. It is found in the cytoskeleton. Its subcellular location is the cilium axoneme. May regulate cilium motility through its role in the assembly of the axonemal RS2 radial spoke. The protein is Cilia- and flagella-associated protein 206 of Tetrahymena thermophila (strain SB210).